The following is a 215-amino-acid chain: Golgi-associated RAB2 interactor protein 5A (215 aa).

2 disordered regions span residues 1–20 (MKRG…AGPG) and 174–215 (QDYS…LWGL). Over residues 178–191 (ALEDDEDDDEDEDR) the composition is skewed to acidic residues.

Belongs to the GARIN family. As to quaternary structure, interacts (via N-terminus) with RAB2B (in GTP-bound form).

Its subcellular location is the golgi apparatus. Functionally, RAB2B effector protein which promotes cytosolic DNA-induced innate immune responses. Regulates IFN responses against DNA viruses by regulating the CGAS-STING signaling axis. The protein is Golgi-associated RAB2 interactor protein 5A (GARIN5A) of Bos taurus (Bovine).